Here is a 370-residue protein sequence, read N- to C-terminus: 2-Hydroxyacid oxidase 1 (370 aa).

One can recognise an FMN hydroxy acid dehydrogenase domain in the interval 1-365; the sequence is MLPRLICIND…DKTLVRKNPL (365 aa). Residue Tyr26 participates in glyoxylate binding. FMN contacts are provided by residues 79-81, Ser108, and Gln130; that span reads ATA. Glyoxylate is bound at residue Tyr132. Thr158 serves as a coordination point for FMN. Arg167 serves as a coordination point for glyoxylate. Lys184 carries the N6-succinyllysine modification. Phosphoserine is present on residues Ser194 and Ser230. FMN is bound by residues Lys236 and Ser258. Residues His260 and Arg263 each coordinate glyoxylate. The active-site Proton acceptor is the His260. FMN-binding positions include 291–295 and 314–315; these read DGGVR and GR. The Microbody targeting signal signature appears at 368 to 370; the sequence is SKI.

It belongs to the FMN-dependent alpha-hydroxy acid dehydrogenase family. In terms of assembly, homotetramer. It depends on FMN as a cofactor. In terms of tissue distribution, highly expressed in liver.

Its subcellular location is the peroxisome matrix. The catalysed reaction is a (2S)-2-hydroxycarboxylate + O2 = a 2-oxocarboxylate + H2O2. It catalyses the reaction glycolate + O2 = glyoxylate + H2O2. The enzyme catalyses glyoxylate + O2 + H2O = oxalate + H2O2 + H(+). It carries out the reaction 2-hydroxyhexadecanoate + O2 = 2-oxohexadecanoate + H2O2. The catalysed reaction is 2-hydroxyoctanoate + O2 = 2-oxooctanoate + H2O2. It participates in amino-acid biosynthesis; glycine biosynthesis. Its activity is regulated as follows. Inhibited by its product oxalate. Inhibited by high concentrations of dichlorophenolindophenol (DCIP) in vitro. In terms of biological role, broad substrate specificity (S)-2-hydroxy-acid oxidase that preferentially oxidizes glycolate. The glyoxylate produced by the oxidation of glycolate can then be utilized by alanine-glyoxylate aminotransferase for the peroxisomal synthesis of glycine; this pathway appears to be an important step for the detoxification of glyoxylate which, if allowed to accumulate, may be metabolized to oxalate with formation of kidney stones. Can also catalyze the oxidation of glyoxylate, and long chain hydroxyacids such as 2-hydroxyhexadecanoate and 2-hydroxyoctanoate, albeit with much lower catalytic efficiency. Active in vitro with the artificial electron acceptor 2,6-dichlorophenolindophenol (DCIP), but O2 is believed to be the physiological electron acceptor, leading to the production of H2O2. Is not active on L-lactate and 2-hydroxybutanoate. The chain is 2-Hydroxyacid oxidase 1 from Homo sapiens (Human).